The chain runs to 310 residues: Methionyl-tRNA formyltransferase (310 aa).

111-114 (SLLP) is a (6S)-5,6,7,8-tetrahydrofolate binding site.

This sequence belongs to the Fmt family.

The catalysed reaction is L-methionyl-tRNA(fMet) + (6R)-10-formyltetrahydrofolate = N-formyl-L-methionyl-tRNA(fMet) + (6S)-5,6,7,8-tetrahydrofolate + H(+). Attaches a formyl group to the free amino group of methionyl-tRNA(fMet). The formyl group appears to play a dual role in the initiator identity of N-formylmethionyl-tRNA by promoting its recognition by IF2 and preventing the misappropriation of this tRNA by the elongation apparatus. This is Methionyl-tRNA formyltransferase from Afipia carboxidovorans (strain ATCC 49405 / DSM 1227 / KCTC 32145 / OM5) (Oligotropha carboxidovorans).